A 310-amino-acid chain; its full sequence is tRNA pseudouridine synthase B (310 aa).

Asp47 acts as the Nucleophile in catalysis.

It belongs to the pseudouridine synthase TruB family. Type 1 subfamily.

The catalysed reaction is uridine(55) in tRNA = pseudouridine(55) in tRNA. Responsible for synthesis of pseudouridine from uracil-55 in the psi GC loop of transfer RNAs. This chain is tRNA pseudouridine synthase B, found in Caulobacter sp. (strain K31).